We begin with the raw amino-acid sequence, 634 residues long: Chaperone protein DnaK (634 aa).

T197 carries the phosphothreonine; by autocatalysis modification. Positions 515–528 are enriched in basic and acidic residues; sequence LHKEDDKKRKESVD. 2 disordered regions span residues 515-536 and 595-634; these read LHKE…ADAI and YKAA…AEVE. Residues 603–615 show a composition bias toward gly residues; the sequence is NAGGTAGGNGNAG.

This sequence belongs to the heat shock protein 70 family.

In terms of biological role, acts as a chaperone. The polypeptide is Chaperone protein DnaK (Campylobacter hominis (strain ATCC BAA-381 / DSM 21671 / CCUG 45161 / LMG 19568 / NCTC 13146 / CH001A)).